The primary structure comprises 938 residues: Isoleucine--tRNA ligase (938 aa).

The short motif at 58-68 (PYANGNIHLGH) is the 'HIGH' region element. E562 contributes to the L-isoleucyl-5'-AMP binding site. The 'KMSKS' region motif lies at 603–607 (KMSKS). Residue K606 coordinates ATP. 4 residues coordinate Zn(2+): C901, C904, C921, and C924.

Belongs to the class-I aminoacyl-tRNA synthetase family. IleS type 1 subfamily. In terms of assembly, monomer. It depends on Zn(2+) as a cofactor.

It localises to the cytoplasm. It carries out the reaction tRNA(Ile) + L-isoleucine + ATP = L-isoleucyl-tRNA(Ile) + AMP + diphosphate. Functionally, catalyzes the attachment of isoleucine to tRNA(Ile). As IleRS can inadvertently accommodate and process structurally similar amino acids such as valine, to avoid such errors it has two additional distinct tRNA(Ile)-dependent editing activities. One activity is designated as 'pretransfer' editing and involves the hydrolysis of activated Val-AMP. The other activity is designated 'posttransfer' editing and involves deacylation of mischarged Val-tRNA(Ile). In Glaesserella parasuis serovar 5 (strain SH0165) (Haemophilus parasuis), this protein is Isoleucine--tRNA ligase.